The chain runs to 199 residues: Hematopoietic prostaglandin D synthase (199 aa).

Positions 2–79 (PNYKLLYFNM…YLTKNTDLAG (78 aa)) constitute a GST N-terminal domain. Residues Tyr-8, Arg-14, Trp-39, 49 to 51 (GKI), and 63 to 64 (QS) contribute to the glutathione site. In terms of domain architecture, GST C-terminal spans 81–199 (TALEQCQADA…WILKRPQTKL (119 aa)).

It belongs to the GST superfamily. Sigma family. In terms of assembly, homodimer. Glutathione serves as cofactor. Expressed in skin and oviduct.

The protein localises to the cytoplasm. It carries out the reaction prostaglandin H2 = prostaglandin D2. It catalyses the reaction RX + glutathione = an S-substituted glutathione + a halide anion + H(+). The catalysed reaction is 2-glyceryl-prostaglandin H2 = 2-glyceryl-prostaglandin D2. Functionally, bifunctional enzyme which catalyzes both the conversion of PGH2 to PGD2, a prostaglandin involved in smooth muscle contraction/relaxation and a potent inhibitor of platelet aggregation, and the conjugation of glutathione with a wide range of aryl halides and organic isothiocyanates. Also exhibits low glutathione-peroxidase activity. The chain is Hematopoietic prostaglandin D synthase from Mus musculus (Mouse).